The sequence spans 423 residues: CinA-like protein (423 aa).

It belongs to the CinA family.

This Desulforapulum autotrophicum (strain ATCC 43914 / DSM 3382 / VKM B-1955 / HRM2) (Desulfobacterium autotrophicum) protein is CinA-like protein.